The sequence spans 762 residues: cGMP-dependent protein kinase 2 (762 aa).

Positions 1-26 (MGNGSVKPKHAKHPDGHSGNLSNEAL) are disordered. A lipid anchor (N-myristoyl glycine) is attached at Gly2. Phosphoserine occurs at positions 110 and 117. A disordered region spans residues 118 to 138 (RRGAKAGVSAEPTTRTYDLNK). The interval 168–283 (FLKRLDPQQI…DEEYRNFLRS (116 aa)) is cGMP-binding, high affinity; cAMP-binding, moderate affinity. Residues 232-235 (GELA), 242-243 (RT), Lys347, 356-359 (GEKA), 366-367 (RS), Asp412, and Arg415 contribute to the 3',5'-cyclic GMP site. A cGMP-binding, high affinity; cAMP-binding, low affinity region spans residues 286–416 (LLKNLPEDKL…TLNRDDEKRH (131 aa)). A Phosphoserine modification is found at Ser431. The Protein kinase domain occupies 453-711 (LEIIATLGVG…INDIKKHRWL (259 aa)). Residues 459-467 (LGVGGFGRV) and Lys482 contribute to the ATP site. Asp576 serves as the catalytic Proton acceptor. At Thr609 the chain carries Phosphothreonine. Residues 712 to 762 (NGFNWEGLKARSLPSPLRRELSGPIDHSYFDKYPPEKGVPPDEMSGWDKDF) form the AGC-kinase C-terminal domain. A disordered region spans residues 740–762 (YFDKYPPEKGVPPDEMSGWDKDF).

This sequence belongs to the protein kinase superfamily. AGC Ser/Thr protein kinase family. cGMP subfamily. In terms of assembly, interacts with GRIA1/GLUR1. In terms of processing, myristoylation mediates membrane localization.

The protein localises to the apical cell membrane. It localises to the cell membrane. It carries out the reaction L-seryl-[protein] + ATP = O-phospho-L-seryl-[protein] + ADP + H(+). It catalyses the reaction L-threonyl-[protein] + ATP = O-phospho-L-threonyl-[protein] + ADP + H(+). Binding of cGMP results in enzyme activation. Its function is as follows. Crucial regulator of intestinal secretion and bone growth. Phosphorylates and activates CFTR on the plasma membrane. Plays a key role in intestinal secretion by regulating cGMP-dependent translocation of CFTR in jejunum. Acts downstream of NMDAR to activate the plasma membrane accumulation of GRIA1/GLUR1 in synapse and increase synaptic plasticity. Phosphorylates GRIA1/GLUR1 at Ser-863. Acts as a regulator of gene expression and activator of the extracellular signal-regulated kinases MAPK3/ERK1 and MAPK1/ERK2 in mechanically stimulated osteoblasts. Under fluid shear stress, mediates ERK activation and subsequent induction of FOS, FOSL1/FRA1, FOSL2/FRA2 and FOSB that play a key role in the osteoblast anabolic response to mechanical stimulation. The chain is cGMP-dependent protein kinase 2 (Prkg2) from Mus musculus (Mouse).